Here is a 338-residue protein sequence, read N- to C-terminus: tRNA pseudouridine synthase D (338 aa).

The active-site Nucleophile is the Asp79. Residues 154-303 enclose the TRUD domain; sequence GVPNYFGEQR…EEAWRANILY (150 aa).

It belongs to the pseudouridine synthase TruD family.

The enzyme catalyses uridine(13) in tRNA = pseudouridine(13) in tRNA. Responsible for synthesis of pseudouridine from uracil-13 in transfer RNAs. This chain is tRNA pseudouridine synthase D, found in Legionella pneumophila (strain Lens).